Here is a 63-residue protein sequence, read N- to C-terminus: Glutamine synthetase translation inhibitor (63 aa).

In terms of biological role, inhibits the synthesis of glutamine synthetase II. The sequence is that of Glutamine synthetase translation inhibitor (gstI) from Rhizobium leguminosarum.